The primary structure comprises 705 residues: Polyphosphate kinase (705 aa).

Asn-58 lines the ATP pocket. Residues Arg-389 and Arg-419 each contribute to the Mg(2+) site. Residue His-449 is the Phosphohistidine intermediate of the active site. ATP contacts are provided by Tyr-482, Arg-578, and His-606.

The protein belongs to the polyphosphate kinase 1 (PPK1) family. Requires Mg(2+) as cofactor. Post-translationally, an intermediate of this reaction is the autophosphorylated ppk in which a phosphate is covalently linked to a histidine residue through a N-P bond.

The catalysed reaction is [phosphate](n) + ATP = [phosphate](n+1) + ADP. Its function is as follows. Catalyzes the reversible transfer of the terminal phosphate of ATP to form a long-chain polyphosphate (polyP). The polypeptide is Polyphosphate kinase (Halalkalibacterium halodurans (strain ATCC BAA-125 / DSM 18197 / FERM 7344 / JCM 9153 / C-125) (Bacillus halodurans)).